We begin with the raw amino-acid sequence, 314 residues long: Inactive UDP-glycosyltransferase 79A6 (314 aa).

Expressed in young leaves, flowers, pods and pod shells. Barely detected in seeds, roots and root nodules.

In terms of biological role, has no flavonol 3-O-glucoside (1-&gt;6) rhamnosyltransferase activity in vitro. This Glycine max (Soybean) protein is Inactive UDP-glycosyltransferase 79A6.